Consider the following 897-residue polypeptide: Patched domain-containing protein 1 (897 aa).

A helical membrane pass occupies residues 25–45; it reads PVFFLTVPAVLTIIFGSTVLS. Residues asparagine 132, asparagine 167, and asparagine 179 are each glycosylated (N-linked (GlcNAc...) asparagine). 2 helical membrane-spanning segments follow: residues 271–291 and 306–326; these read GVLA…AATI and GLLG…IFFI. The SSD domain occupies 273-433; that stretch reads LAKSEVLVSL…FSFYGSCLVF (161 aa). Residue asparagine 332 is glycosylated (N-linked (GlcNAc...) asparagine). 4 consecutive transmembrane segments (helical) span residues 335–355, 377–397, 414–434, and 506–526; these read LLGI…ELLA, VMVC…MGAS, VAVL…LVFA, and PFVV…CLQI. Asparagine 572 and asparagine 603 each carry an N-linked (GlcNAc...) asparagine glycan. The next 3 helical transmembrane spans lie at 701 to 721, 727 to 747, and 754 to 774; these read PILT…FLVI, FWLI…MTLW, and ISIL…APHL. Asparagine 803 is a glycosylation site (N-linked (GlcNAc...) asparagine). A run of 2 helical transmembrane segments spans residues 806 to 826 and 831 to 851; these read CFVI…YTLF and LTAG…LTFF. A compositionally biased stretch (basic residues) spans 856–866; that stretch reads KRHKKKKRAKR. A disordered region spans residues 856–881; sequence KRHKKKKRAKRKEREREREREREREE. Residues 867 to 881 are compositionally biased toward basic and acidic residues; the sequence is KEREREREREREREE.

Belongs to the patched family.

Its subcellular location is the cell membrane. It is found in the cell projection. The protein localises to the dendritic spine. Can bind cholesterol in vitro. The sequence is that of Patched domain-containing protein 1 (ptchd1) from Danio rerio (Zebrafish).